A 217-amino-acid polypeptide reads, in one-letter code: Zinc finger CCHC-type and RNA-binding motif-containing protein 1 (217 aa).

The region spanning 10-88 (STVYVSNLPF…RVIKASIAID (79 aa)) is the RRM domain. The segment at 105 to 122 (SKCYECGESGHLSYACPK) adopts a CCHC-type zinc-finger fold. The disordered stretch occupies residues 120–217 (CPKNMLGERE…YFSDEEELSD (98 aa)). Acidic residues predominate over residues 145–163 (PEEEIEEVEESEDEGEDPA). Phosphoserine is present on residues serine 155, serine 210, and serine 216.

In terms of assembly, component of the U11/U12 snRNPs that are part of the U12-type spliceosome. Interacts with ZRSR1.

The protein resides in the nucleus. The protein localises to the nucleoplasm. The chain is Zinc finger CCHC-type and RNA-binding motif-containing protein 1 (ZCRB1) from Bos taurus (Bovine).